The following is a 420-amino-acid chain: 2,3-dimethylmalate dehydratase large subunit (420 aa).

Residues Cys-301, Cys-361, and Cys-364 each coordinate [4Fe-4S] cluster.

This sequence belongs to the aconitase/IPM isomerase family. LeuC type 2 subfamily. As to quaternary structure, heterodimer of a large and a small subunit. Requires [4Fe-4S] cluster as cofactor.

It carries out the reaction (2R,3S)-2,3-dimethylmalate = dimethylmaleate + H2O. Its pathway is cofactor degradation; nicotinate degradation; propanoate and pyruvate from 6-hydroxynicotinate: step 7/8. In Eubacterium barkeri (Clostridium barkeri), this protein is 2,3-dimethylmalate dehydratase large subunit (dmdA).